The chain runs to 372 residues: Citrate/2-methylcitrate synthase (372 aa).

Substrate is bound at residue His188. The active site involves His223. 256–260 (KIMGF) is a binding site for CoA. The active site involves His262. Arg272 is a binding site for substrate. Residue Asp314 is part of the active site. Residues Arg339 and Arg358 each contribute to the substrate site.

This sequence belongs to the citrate synthase family.

The catalysed reaction is propanoyl-CoA + oxaloacetate + H2O = 2-methylcitrate + CoA + H(+). The enzyme catalyses oxaloacetate + acetyl-CoA + H2O = citrate + CoA + H(+). Its pathway is carbohydrate metabolism; tricarboxylic acid cycle; isocitrate from oxaloacetate: step 1/2. In terms of biological role, involved in both the tricarboxylic acid (TCA) and methylcitric acid cycles. Has both 2-methylcitrate synthase and citrate synthase activities. Catalyzes the condensation of propionyl-CoA and oxaloacetate to yield 2-methylcitrate (2-MC) and CoA, and the condensation of acetyl-CoA and oxaloacetate to yield citrate and CoA. Has 2.3-fold higher activity as a 2-methylcitrate synthase. Catalyzes the formation of either (2S,3R)- or (2R,3S)-2-methylcitrate. The chain is Citrate/2-methylcitrate synthase from Bacillus subtilis (strain 168).